A 222-amino-acid chain; its full sequence is Interleukin-12 subunit alpha (222 aa).

The first 25 residues, 1–25, serve as a signal peptide directing secretion; sequence MCPLRSLFLMATLVFLNHLDHLSLA. Cystine bridges form between C40/C113, C67/C199, and C88/C126. Residues N96 and N174 are each glycosylated (N-linked (GlcNAc...) asparagine).

Belongs to the IL-6 superfamily. As to quaternary structure, heterodimer with IL12B; disulfide-linked. This heterodimer is known as interleukin IL-12. Heterodimer with EBI3/IL27B; not disulfide-linked. This heterodimer is known as interleukin IL-35. Interacts with NBR1; this interaction promotes IL-12 secretion.

It localises to the secreted. Heterodimerizes with IL12B to form the IL-12 cytokine or with EBI3/IL27B to form the IL-35 cytokine. IL-12 is primarily produced by professional antigen-presenting cells (APCs) such as B-cells and dendritic cells (DCs) as well as macrophages and granulocytes and regulates T-cell and natural killer-cell responses, induces the production of interferon-gamma (IFN-gamma), favors the differentiation of T-helper 1 (Th1) cells and is an important link between innate resistance and adaptive immunity. Mechanistically, exerts its biological effects through a receptor composed of IL12R1 and IL12R2 subunits. Binding to the receptor results in the rapid tyrosine phosphorylation of a number of cellular substrates including the JAK family kinases TYK2 and JAK2. In turn, recruited STAT4 gets phosphorylated and translocates to the nucleus where it regulates cytokine/growth factor responsive genes. As part of IL-35, plays essential roles in maintaining the immune homeostasis of the liver microenvironment and also functions as an immune-suppressive cytokine. Mediates biological events through unconventional receptors composed of IL12RB2 and gp130/IL6ST heterodimers or homodimers. Signaling requires the transcription factors STAT1 and STAT4, which form a unique heterodimer that binds to distinct DNA sites. This Lama glama (Llama) protein is Interleukin-12 subunit alpha (IL12A).